Here is a 362-residue protein sequence, read N- to C-terminus: Adenosine deaminase (362 aa).

His-19 and His-21 together coordinate Zn(2+). Substrate is bound by residues His-21, Asp-23, and Gly-181. His-208 is a binding site for Zn(2+). The active-site Proton donor is the Glu-211. Asp-300 contributes to the Zn(2+) binding site.

Belongs to the metallo-dependent hydrolases superfamily. Adenosine and AMP deaminases family. Adenosine deaminase subfamily. Zn(2+) is required as a cofactor.

The enzyme catalyses adenosine + H2O + H(+) = inosine + NH4(+). It catalyses the reaction 2'-deoxyadenosine + H2O + H(+) = 2'-deoxyinosine + NH4(+). Its function is as follows. Catalyzes the hydrolytic deamination of adenosine and 2-deoxyadenosine. The sequence is that of Adenosine deaminase from Mycolicibacterium vanbaalenii (strain DSM 7251 / JCM 13017 / BCRC 16820 / KCTC 9966 / NRRL B-24157 / PYR-1) (Mycobacterium vanbaalenii).